Here is a 567-residue protein sequence, read N- to C-terminus: DNA ligase B (567 aa).

The N6-AMP-lysine intermediate role is filled by K132.

It belongs to the NAD-dependent DNA ligase family. LigB subfamily.

The enzyme catalyses NAD(+) + (deoxyribonucleotide)n-3'-hydroxyl + 5'-phospho-(deoxyribonucleotide)m = (deoxyribonucleotide)n+m + AMP + beta-nicotinamide D-nucleotide.. Its function is as follows. Catalyzes the formation of phosphodiester linkages between 5'-phosphoryl and 3'-hydroxyl groups in double-stranded DNA using NAD as a coenzyme and as the energy source for the reaction. The protein is DNA ligase B of Yersinia pseudotuberculosis serotype O:1b (strain IP 31758).